A 382-amino-acid polypeptide reads, in one-letter code: Anhydro-N-acetylmuramic acid kinase (382 aa).

18–25 (GTSLDGVD) serves as a coordination point for ATP.

It belongs to the anhydro-N-acetylmuramic acid kinase family.

The catalysed reaction is 1,6-anhydro-N-acetyl-beta-muramate + ATP + H2O = N-acetyl-D-muramate 6-phosphate + ADP + H(+). It participates in amino-sugar metabolism; 1,6-anhydro-N-acetylmuramate degradation. The protein operates within cell wall biogenesis; peptidoglycan recycling. Its function is as follows. Catalyzes the specific phosphorylation of 1,6-anhydro-N-acetylmuramic acid (anhMurNAc) with the simultaneous cleavage of the 1,6-anhydro ring, generating MurNAc-6-P. Is required for the utilization of anhMurNAc either imported from the medium or derived from its own cell wall murein, and thus plays a role in cell wall recycling. This Ralstonia nicotianae (strain ATCC BAA-1114 / GMI1000) (Ralstonia solanacearum) protein is Anhydro-N-acetylmuramic acid kinase.